A 648-amino-acid polypeptide reads, in one-letter code: MEELKAYRPKTSPELDPSTLSNYTCFTVKLTTLHFDIDFEKKIVSGKVKYDLLNKSETDHVDLDTSYLDITKVSIQNESCDNQYKLHSRKEPLGSKLHILIPASTPKNFQLEIEFSTTSKCTALQFLDKEATDGKNHPYLFCQCQAIHARSLFPSFDTPGIKSPYKFSAKSPLKTLLSGLLIKEDNENNTVYFEQPVPIPSYLVSIALGDIARTSIGPRSDVMTEPVNLAKCKWEFERDMENFIQVAEKLIFEYEWQKFDSLVLPASFPYGGMEIPNLCQLTPTLICGDRSLVNVVAHELAHSWSGNLVTNCSWEHFWLNEGWTVYLERRILEALAVIEAKQQGKGDKEAHYYGEQVRQFNAIIGWTDLENDLKSMGDNVDKYSILVQDLKGKKNPDDPDDAFSTVPYEKGFNLLYLIEKIVGKEKFDLFIPAYFREFRFKSLDTFQFIDYLFDFFKEDAVKLDQIEWKKWLYEPGMPPIDPKFDTTLAQACYDLAKKCYQYALSEDDENEFTQFKLVANEINDFSPSQNIVFLDTLIAYEKVAGFSWKQHKKTLNRMATLYHDQYTETLNAEIKFRWFYLQATGEVLDFEVAMGEFLGTIGRMKFVRPGYALLNKVNRELAVRYFQRFENRYHPICKAMVRKDLQLD.

A peptide is bound by residues 143–145 (QCQ) and 269–274 (PYGGME). Position 298 (His298) interacts with Zn(2+). Glu299 functions as the Proton acceptor in the catalytic mechanism. Positions 302 and 321 each coordinate Zn(2+). Residue Tyr408 is the Proton donor of the active site.

The protein belongs to the peptidase M1 family. Zn(2+) serves as cofactor.

The protein resides in the cytoplasm. It localises to the nucleus. It carries out the reaction an epoxide + H2O = an ethanediol. Aminopeptidase that preferentially cleaves di- and tripeptides. Also has low epoxide hydrolase activity (in vitro). Can hydrolyze the epoxide leukotriene LTA(4) but it forms preferentially 5,6-dihydroxy-7,9,11,14-eicosatetraenoic acid rather than the cytokine leukotriene B(4) as the product compared to the homologous mammalian enzyme (in vitro). The protein is Leucine aminopeptidase 2 of Lodderomyces elongisporus (strain ATCC 11503 / CBS 2605 / JCM 1781 / NBRC 1676 / NRRL YB-4239) (Yeast).